A 283-amino-acid polypeptide reads, in one-letter code: Nucleotide-binding protein ACIAD3059 (283 aa).

ATP is bound at residue 9–16 (GQSGSGKS). 59-62 (DVRS) is a GTP binding site.

The protein belongs to the RapZ-like family.

Functionally, displays ATPase and GTPase activities. This chain is Nucleotide-binding protein ACIAD3059, found in Acinetobacter baylyi (strain ATCC 33305 / BD413 / ADP1).